A 147-amino-acid polypeptide reads, in one-letter code: Nucleoside diphosphate kinase (147 aa).

ATP-binding residues include Lys9, Phe57, Arg85, Thr91, Arg102, and Asn112. The residue at position 91 (Thr91) is a Phosphothreonine. Residue His115 is the Pros-phosphohistidine intermediate of the active site. Position 122 is a phosphoserine (Ser122).

This sequence belongs to the NDK family. As to quaternary structure, homotetramer. Mg(2+) is required as a cofactor.

Its subcellular location is the cytoplasm. The enzyme catalyses a 2'-deoxyribonucleoside 5'-diphosphate + ATP = a 2'-deoxyribonucleoside 5'-triphosphate + ADP. The catalysed reaction is a ribonucleoside 5'-diphosphate + ATP = a ribonucleoside 5'-triphosphate + ADP. In terms of biological role, major role in the synthesis of nucleoside triphosphates other than ATP. The ATP gamma phosphate is transferred to the NDP beta phosphate via a ping-pong mechanism, using a phosphorylated active-site intermediate. The chain is Nucleoside diphosphate kinase from Halalkalibacterium halodurans (strain ATCC BAA-125 / DSM 18197 / FERM 7344 / JCM 9153 / C-125) (Bacillus halodurans).